The chain runs to 432 residues: Adenylosuccinate synthetase (432 aa).

Residues 12–18 and 40–42 each bind GTP; these read GDEGKGK and GHT. D13 functions as the Proton acceptor in the catalytic mechanism. Residues D13 and G40 each contribute to the Mg(2+) site. IMP-binding positions include 13-16, 38-41, T130, R144, Q225, T240, and R304; these read DEGK and NAGH. Residue H41 is the Proton donor of the active site. 300-306 is a binding site for substrate; it reads ATTGRPR. Residues R306, 332-334, and 414-416 contribute to the GTP site; these read KLD and SVG.

This sequence belongs to the adenylosuccinate synthetase family. As to quaternary structure, homodimer. The cofactor is Mg(2+).

It is found in the cytoplasm. It catalyses the reaction IMP + L-aspartate + GTP = N(6)-(1,2-dicarboxyethyl)-AMP + GDP + phosphate + 2 H(+). It functions in the pathway purine metabolism; AMP biosynthesis via de novo pathway; AMP from IMP: step 1/2. Its function is as follows. Plays an important role in the de novo pathway of purine nucleotide biosynthesis. Catalyzes the first committed step in the biosynthesis of AMP from IMP. In Anaeromyxobacter dehalogenans (strain 2CP-C), this protein is Adenylosuccinate synthetase.